The primary structure comprises 935 residues: UvrABC system protein A (935 aa).

31–38 (GLSGSGKS) provides a ligand contact to ATP. A C4-type zinc finger spans residues 254 to 281 (CFKCKMSFEELEPLSFSFNSPKGACESC). ABC transporter domains are found at residues 310–579 (IFGY…NNHS) and 599–931 (KEKH…KFLA). 631 to 638 (GVSGSGKS) lines the ATP pocket. The C4-type zinc-finger motif lies at 731 to 757 (CEKCQGDGDIKIEMHFLPDVLVQCDSC).

This sequence belongs to the ABC transporter superfamily. UvrA family. In terms of assembly, forms a heterotetramer with UvrB during the search for lesions.

It localises to the cytoplasm. Functionally, the UvrABC repair system catalyzes the recognition and processing of DNA lesions. UvrA is an ATPase and a DNA-binding protein. A damage recognition complex composed of 2 UvrA and 2 UvrB subunits scans DNA for abnormalities. When the presence of a lesion has been verified by UvrB, the UvrA molecules dissociate. The polypeptide is UvrABC system protein A (Helicobacter pylori (strain ATCC 700392 / 26695) (Campylobacter pylori)).